We begin with the raw amino-acid sequence, 451 residues long: UDP-N-acetylmuramoylalanine--D-glutamate ligase (451 aa).

Gly-116 to Thr-122 is an ATP binding site.

It belongs to the MurCDEF family.

The protein localises to the cytoplasm. The enzyme catalyses UDP-N-acetyl-alpha-D-muramoyl-L-alanine + D-glutamate + ATP = UDP-N-acetyl-alpha-D-muramoyl-L-alanyl-D-glutamate + ADP + phosphate + H(+). Its pathway is cell wall biogenesis; peptidoglycan biosynthesis. Functionally, cell wall formation. Catalyzes the addition of glutamate to the nucleotide precursor UDP-N-acetylmuramoyl-L-alanine (UMA). This Clostridioides difficile (strain 630) (Peptoclostridium difficile) protein is UDP-N-acetylmuramoylalanine--D-glutamate ligase.